The chain runs to 404 residues: Lysophospholipid transporter LplT (404 aa).

Transmembrane regions (helical) follow at residues 16–36 (MIAV…LLFA), 53–73 (ILQM…GQFA), 91–111 (AGAL…LVGV), 139–159 (MMEA…GVLA), 164–184 (GVAL…NMFI), 195–213 (SWRP…LVLW), 227–247 (LFWG…PIAL), 253–273 (ATPT…AGAA), 285–305 (CLPA…QHSM), 310–330 (LLLI…NALL), 350–370 (GENT…KLGV), and 372–392 (VIAV…LLWG).

The protein belongs to the major facilitator superfamily. LplT (TC 2.A.1.42) family.

It localises to the cell inner membrane. Catalyzes the facilitated diffusion of 2-acyl-glycero-3-phosphoethanolamine (2-acyl-GPE) into the cell. The protein is Lysophospholipid transporter LplT of Yersinia enterocolitica serotype O:8 / biotype 1B (strain NCTC 13174 / 8081).